We begin with the raw amino-acid sequence, 335 residues long: COP9 signalosome complex subunit 5 (335 aa).

The MPN domain occupies 51 to 187 (VRISAVALLK…IGAFRTFPKD (137 aa)). 3 residues coordinate Zn(2+): His134, His136, and Asp147. Residues 134 to 147 (HSHPGYGCWLSGID) carry the JAMM motif motif.

The protein belongs to the peptidase M67A family. CSN5 subfamily. Component of the COP9 signalosome (CSN) complex.

It localises to the cytoplasm. The protein resides in the nucleus. Its function is as follows. Catalytic component of the COP9 signalosome (CSN) complex that acts as an regulator of the ubiquitin (Ubl) conjugation pathway by mediating the deneddylation of the cullin subunit of SCF-type E3 ubiquitin-protein ligase complexes. The CSN complex seems to link protein degradation to sexual development. Required for fruit body formation. This Emericella nidulans (strain FGSC A4 / ATCC 38163 / CBS 112.46 / NRRL 194 / M139) (Aspergillus nidulans) protein is COP9 signalosome complex subunit 5 (rri1).